We begin with the raw amino-acid sequence, 184 residues long: Coordinator of PRMT5 and differentiation stimulator (184 aa).

Met-1 is modified (N-acetylmethionine). Over residues 1–14 (MDLQAAGAQAQGAA) the composition is skewed to low complexity. Residues 1 to 136 (MDLQAAGAQA…PYDADDIQES (136 aa)) are disordered. Basic and acidic residues predominate over residues 42 to 56 (SSQERETEKAMDRLA). Phosphoserine occurs at positions 66 and 75. Positions 78–89 (EGFAMDEEDSDG) are enriched in acidic residues.

In terms of assembly, interacts with PRMT5. Interacts with histone H4; specifically interacts with the N-terminus of histone H4 but not with histone H3. Interacts with CBFB. Found in a complex with PRMT5, RUNX1 and CBFB.

The protein resides in the nucleus. Histone-binding protein required for histone H4 methyltransferase activity of PRMT5. Specifically required for histone H4 'Arg-3' methylation mediated by PRMT5, but not histone H3 'Arg-8' methylation, suggesting that it modulates the substrate specificity of PRMT5. Specifically interacts with the N-terminus of histone H4 but not with histone H3, suggesting that it acts by promoting the association between histone H4 and PRMT5. Involved in CCNE1 promoter repression. Plays a role in muscle cell differentiation by modulating the recruitment of PRMT5 to the promoter of genes involved in the coordination between cell cycle exit and muscle differentiation. The sequence is that of Coordinator of PRMT5 and differentiation stimulator (COPRS) from Homo sapiens (Human).